We begin with the raw amino-acid sequence, 320 residues long: Serpentine receptor class delta-40 (320 aa).

The next 7 helical transmembrane spans lie at 12 to 32 (IFYP…IYLI), 42 to 62 (MLKV…VVSC), 95 to 115 (YQVL…TFVF), 133 to 153 (IILL…IMVI), 189 to 209 (LINF…SFFF), 243 to 263 (AFLP…CILT), and 273 to 293 (FMTV…LYFV).

Belongs to the nematode receptor-like protein srd family.

It is found in the membrane. This Caenorhabditis elegans protein is Serpentine receptor class delta-40 (srd-40).